The chain runs to 256 residues: Matrix protein (256 aa).

Positions 1 to 110 (METYVNKLHE…KLAYDVTTPC (110 aa)) are interaction with M2-1. The nuclear targeting and binding to host importin KPNB1 stretch occupies residues 110–183 (CEIKACSLTC…LNTLENITTT (74 aa)). The short motif at 194 to 206 (IIPYSGLLLVITV) is the Nuclear export signal element. The residue at position 205 (Thr-205) is a Phosphothreonine; by host CK2.

It belongs to the pneumovirinae M protein family. In terms of assembly, forms dimers. Forms higher-order oligomers. Interacts with glycoprotein G (via N-terminus). Interacts with protein M2-1; this interaction directs the matrix protein localization to cytoplasmic inclusions comprising viral proteins L, N, P, and M2-1 and mediates the matrix protein association with the nucleocapsid. Interacts with host importin KPNB1; this interaction mediates nuclear import of the matrix protein early during infection. Interacts with host AP3M1; this interaction plays an essential role in trafficking the matrix protein in host cells. Interacts with host CAV1; this interaction probably facilitates viral budding. Interacts with host CFL1; this interaction probably facilitates viral replication. Interacts with host ZNF502; this interaction probably facilitates viral release. Interacts with host RACK1. In terms of processing, phosphorylation is important for oligomerization.

The protein resides in the virion. Its subcellular location is the host cytoplasm. It localises to the host nucleus. It is found in the host cell membrane. Its function is as follows. Plays a crucial role in virus assembly into filaments and budding. Early in infection, localizes in the nucleus where it inhibits host cell transcription through direct binding to host chromatin. Later in infection, traffics to the cytoplasm through the action of host CRM1 to associate with inclusion bodies, the site of viral transcription and replication. During virus assembly and budding, acts as a bridge between the nucleocapsid and the lipid bilayer. Also plays a role in the inhibition of host interferon-beta response in a RACK1-dependent manner. The protein is Matrix protein (M) of Homo sapiens (Human).